The sequence spans 318 residues: Mitochondrial thiamine pyrophosphate carrier 1 (318 aa).

6 consecutive transmembrane segments (helical) span residues G12 to S28, L91 to T107, S125 to Y141, G181 to F197, A221 to L237, and G284 to W301. 3 Solcar repeats span residues G12–A110, P120–V206, and P214–Y309.

The protein belongs to the mitochondrial carrier (TC 2.A.29) family.

The protein localises to the mitochondrion inner membrane. In terms of biological role, mitochondrial transporter that mediates uptake of thiamine pyrophosphate (ThPP) into mitochondria. The polypeptide is Mitochondrial thiamine pyrophosphate carrier 1 (tpc1) (Aspergillus oryzae (strain ATCC 42149 / RIB 40) (Yellow koji mold)).